The chain runs to 189 residues: Lutzicidin (189 aa).

The signal sequence occupies residues 1-22 (MQGFFWKTLLVVALCGTSSSLA). Positions 23-155 (HRPLSYGEAL…DEEKDRPKRV (133 aa)) are excised as a propeptide. Cystine bridges form between Cys-79/Cys-90 and Cys-101/Cys-118. Over residues 125–148 (EEEEEDEEEQKAEVEKDEEKEDEE) the composition is skewed to acidic residues. A disordered region spans residues 125 to 152 (EEEEEDEEEQKAEVEKDEEKEDEEKDRP).

Belongs to the cathelicidin family. As to expression, expressed by the venom gland.

It localises to the secreted. Its subcellular location is the target cell membrane. Potent antimicrobial peptide against Gram-negative and Gram-positive bacteria. Adopts an amphipathic alpha helical conformation, that may allow to partition into the target membrane. Low hemolytic activities have been observed on mammalian cells. The polypeptide is Lutzicidin (Bothrops lutzi (Sertao lancehead)).